The primary structure comprises 318 residues: Cobalamin biosynthesis protein CobD (318 aa).

A run of 5 helical transmembrane segments spans residues 56 to 76, 78 to 98, 153 to 173, 204 to 224, and 298 to 318; these read VLWL…LWLM, EINP…LLAG, VDGV…LAMA, LANW…AWLI, and MMAS…LVGI.

Belongs to the CobD/CbiB family.

It is found in the cell membrane. It functions in the pathway cofactor biosynthesis; adenosylcobalamin biosynthesis. In terms of biological role, converts cobyric acid to cobinamide by the addition of aminopropanol on the F carboxylic group. The chain is Cobalamin biosynthesis protein CobD from Yersinia enterocolitica serotype O:8 / biotype 1B (strain NCTC 13174 / 8081).